The sequence spans 515 residues: Putative pumilio homolog 8, chloroplastic (515 aa).

The disordered stretch occupies residues 1 to 33; that stretch reads MMRGEFGEASSLSRSPSSPLQTEPHPQSPKFYR. The transit peptide at 1-70 directs the protein to the chloroplast; the sequence is MMRGEFGEAS…LSSYFSNGLC (70 aa). Positions 10 to 20 are enriched in low complexity; the sequence is SSLSRSPSSPL. Residues 174-515 enclose the PUM-HD domain; that stretch reads SGVGALFDHQ…RIFSRNLLKN (342 aa). 8 Pumilio repeats span residues 198-233, 234-269, 270-308, 310-345, 346-381, 382-417, 418-456, and 457-490; these read EFQG…VIFS, EVIP…QIIL, MVTS…SLVK, ALRP…FIFE, DATK…KLVT, EISR…AMLA, QLKG…ELIS, and VPHF…TLVE.

The protein localises to the plastid. It is found in the chloroplast. It localises to the cytoplasm. Functionally, sequence-specific RNA-binding protein that regulates translation and mRNA stability by binding the 3'-UTR of target mRNAs. The chain is Putative pumilio homolog 8, chloroplastic (APUM8) from Arabidopsis thaliana (Mouse-ear cress).